The chain runs to 409 residues: UV excision repair protein RAD23 homolog B (409 aa).

Residues 1 to 79 (MQVTLKTLQQ…VVVMVTKPKA (79 aa)) enclose the Ubiquitin-like domain. The tract at residues 80 to 175 (VSTPAPATTQ…STSGDSSRSN (96 aa)) is disordered. The span at 81–143 (STPAPATTQQ…SSEPAPASAA (63 aa)) shows a compositional bias: low complexity. Residues 144 to 153 (KQEKPAEKPA) are compositionally biased toward basic and acidic residues. At Thr155 the chain carries Phosphothreonine. Ser160 carries the post-translational modification Phosphoserine. Residues 160–175 (SPTATDSTSGDSSRSN) show a composition bias toward polar residues. At Thr164 the chain carries Phosphothreonine. Residue Ser174 is modified to Phosphoserine. At Thr186 the chain carries Phosphothreonine. Residues 188–228 (QSYENMVTEIMSMGYEREQVIAALRASFNNPDRAVEYLLMG) form the UBA 1 domain. Ser199 is subject to Phosphoserine. Tyr202 is subject to Phosphotyrosine. Residues 236-276 (QAVVDPPQAASTGAPQSSAVAAAAATTTATTTTTSSGGHPL) form a disordered region. The segment covering 252 to 271 (SSAVAAAAATTTATTTTTSS) has biased composition (low complexity). The 44-residue stretch at 274-317 (HPLEFLRNQPQFQQMRQIIQQNPSLLPALLQQIGRENPQLLQQI) folds into the STI1 domain. Positions 364 to 404 (PQEKEAIERLKALGFPEGLVIQAYFACEKNENLAANFLLQQ) constitute a UBA 2 domain.

This sequence belongs to the RAD23 family. Component of the XPC complex composed of XPC, RAD23B and CETN2. Interacts with NGLY1 and PSMC1. Interacts with ATXN3. Interacts with PSMD4 and PSMC5. Interacts with AMFR. Interacts with VCP; the interaction is indirect and mediated by NGLY1.

The protein resides in the nucleus. The protein localises to the cytoplasm. Its function is as follows. Multiubiquitin chain receptor involved in modulation of proteasomal degradation. Binds to polyubiquitin chains. Proposed to be capable to bind simultaneously to the 26S proteasome and to polyubiquitinated substrates and to deliver ubiquitinated proteins to the proteasome. May play a role in endoplasmic reticulum-associated degradation (ERAD) of misfolded glycoproteins by association with PNGase and delivering deglycosylated proteins to the proteasome. In terms of biological role, involved in global genome nucleotide excision repair (GG-NER) by acting as component of the XPC complex. Cooperatively with CETN2 appears to stabilize XPC. May protect XPC from proteasomal degradation. Functionally, the XPC complex is proposed to represent the first factor bound at the sites of DNA damage and together with other core recognition factors, XPA, RPA and the TFIIH complex, is part of the pre-incision (or initial recognition) complex. The XPC complex recognizes a wide spectrum of damaged DNA characterized by distortions of the DNA helix such as single-stranded loops, mismatched bubbles or single-stranded overhangs. The orientation of XPC complex binding appears to be crucial for inducing a productive NER. XPC complex is proposed to recognize and to interact with unpaired bases on the undamaged DNA strand which is followed by recruitment of the TFIIH complex and subsequent scanning for lesions in the opposite strand in a 5'-to-3' direction by the NER machinery. Cyclobutane pyrimidine dimers (CPDs) which are formed upon UV-induced DNA damage esacpe detection by the XPC complex due to a low degree of structural perurbation. Instead they are detected by the UV-DDB complex which in turn recruits and cooperates with the XPC complex in the respective DNA repair. In vitro, the XPC:RAD23B dimer is sufficient to initiate NER; it preferentially binds to cisplatin and UV-damaged double-stranded DNA and also binds to a variety of chemically and structurally diverse DNA adducts. XPC:RAD23B contacts DNA both 5' and 3' of a cisplatin lesion with a preference for the 5' side. XPC:RAD23B induces a bend in DNA upon binding. XPC:RAD23B stimulates the activity of DNA glycosylases TDG and SMUG1. This Homo sapiens (Human) protein is UV excision repair protein RAD23 homolog B (RAD23B).